Reading from the N-terminus, the 88-residue chain is Sec-independent protein translocase protein TatA (88 aa).

The chain crosses the membrane as a helical span at residues 1 to 21 (MGGIGIWQLAIITVIVILLFG). The interval 46–88 (DNDKDSTQVDDKDSTQVDDNAKQPSNKKVEENIKEQSKEKDRA) is disordered.

The protein belongs to the TatA/E family. As to quaternary structure, the Tat system comprises two distinct complexes: a TatABC complex, containing multiple copies of TatA, TatB and TatC subunits, and a separate TatA complex, containing only TatA subunits. Substrates initially bind to the TatABC complex, which probably triggers association of the separate TatA complex to form the active translocon.

Its subcellular location is the cell inner membrane. In terms of biological role, part of the twin-arginine translocation (Tat) system that transports large folded proteins containing a characteristic twin-arginine motif in their signal peptide across membranes. TatA could form the protein-conducting channel of the Tat system. This is Sec-independent protein translocase protein TatA from Psychromonas ingrahamii (strain DSM 17664 / CCUG 51855 / 37).